Reading from the N-terminus, the 534-residue chain is Protoheme IX farnesyltransferase (534 aa).

A unknown region spans residues 1 to 251 (MRREHARAIL…VLLEGKPSLL (251 aa)). The next 15 helical transmembrane spans lie at 17–37 (PWLL…GGIV), 39–59 (ALTG…ALAI), 83–103 (YLTL…FGAI), 128–148 (LALA…ALAV), 163–183 (VAWA…QVLL), 197–217 (LMHL…TTLA), 261–281 (GVIS…PAGI), 284–304 (LSLV…SHSI), 339–359 (IALG…LAAI), 360–380 (LALA…KRTS), 384–404 (IVIG…AVTG), 411–431 (LLLW…LALI), 457–477 (IVIY…LGML), 479–499 (WAYL…ALKL), and 508–528 (AWAL…AMAV). Residues 252-530 (KDYISLTKPG…ILFVAMAVDR (279 aa)) form a protoheme IX prenyltransferase region.

This sequence in the C-terminal section; belongs to the UbiA prenyltransferase family. Protoheme IX farnesyltransferase subfamily.

The protein resides in the cell membrane. The enzyme catalyses heme b + (2E,6E)-farnesyl diphosphate + H2O = Fe(II)-heme o + diphosphate. The protein operates within porphyrin-containing compound metabolism; heme O biosynthesis; heme O from protoheme: step 1/1. In terms of biological role, converts heme B (protoheme IX) to heme O by substitution of the vinyl group on carbon 2 of heme B porphyrin ring with a hydroxyethyl farnesyl side group. This is Protoheme IX farnesyltransferase (ctaB) from Roseiflexus sp. (strain RS-1).